The following is a 95-amino-acid chain: Small ribosomal subunit protein uS19 (95 aa).

A disordered region spans residues 76 to 95 (PTRTFRGHGGKKADKRGKLK). Residues 80–95 (FRGHGGKKADKRGKLK) show a composition bias toward basic residues.

It belongs to the universal ribosomal protein uS19 family.

In terms of biological role, protein S19 forms a complex with S13 that binds strongly to the 16S ribosomal RNA. This is Small ribosomal subunit protein uS19 from Herpetosiphon aurantiacus (strain ATCC 23779 / DSM 785 / 114-95).